A 537-amino-acid polypeptide reads, in one-letter code: Ribonuclease Y (537 aa).

The chain crosses the membrane as a helical span at residues 4 to 24; that stretch reads FPIIMSVFAAIIGLVIGYVSV. Positions 112–148 are disordered; that stretch reads ASTLDRKDDNLSNKEKALEQKEQSLSDKSKHIDAREE. The KH domain occupies 227–287; the sequence is TNSTVHLPDD…IRREIARMTM (61 aa). The region spanning 353 to 446 is the HD domain; it reads VLRHSIEVAK…VAAADALSAA (94 aa).

This sequence belongs to the RNase Y family.

It localises to the cell membrane. Its function is as follows. Endoribonuclease that initiates mRNA decay. The polypeptide is Ribonuclease Y (Streptococcus sanguinis (strain SK36)).